Consider the following 1966-residue polypeptide: MTAKRVDMAAPDNLLFLDSDAVNSSPASVPIEQNEPTHVLDNQTDDSLRSMPDPHTNTALESTGLMPVPCQDETLETHSQHNEGENESSLVSTQHMDHTRLTEMTINDEKSNNWDFDISGVKENDNSTNLNPDLIHHAGTDSVMERNLNDKQTDLNHKDETFGSLMSSEVLLLKENRQQEMSQDTNLHQCSSSESTGIEYSQTANDAISDAMNSEQSPDQPFSIASNDTDKTTSECSVQTCWDTVESAATSKTQPELHDDVKDVMCESFTTSQTLNIDYLSTDISVCLADLPETDSLNILTPASTLLGILGKNNNVLKTADVPINDSEMVQSINKDLASPNADISKTVFTQMDQNLLHVTDHNVKVLESNRADTVVDQYVFSENIGQEVSQASSHDEDLNSSVQSHDQQLSTANSEIEETSSEFHTQTCQDIHEGVIIAEEAMNGHNTLPEMHDIADVTTSQTPIMKDPMIDEPSYLPDLHKADTPNVITTASTLSDTLETDDSIFETADVSVSDCELIQTVTLKTVTTYETLLMMHDVGEDLTCCDFTTSAIEEPETSHPLSLDDLHESNTPNIPPHASALLDSLGMNKNFLETADVPVSDCEVIQTVTFETVTTYETFPVMHDIAEDLTCCDFTTSETPKIEEPETSHSLSLDDLNEANTPNILPHASALLESLGMNNNFLEAADMPVSDREIIHPVNKDLDSSSVEICTVVLTQTDPKEVQDSDLDEKETESNRIDDSIDGMIDTKFSLDVSKLQPVCSNDLSGTVIHSESLFSQSIPDTPQIGEKYKNDLLQVISPPTPVTNEDLGNCSEEIDDACLKFTGTERDVEGDSELWLEPSQFLAGEEDEGAIFDKWGRSCSSSPPTTHPDNTKASDYTWRENISIDHNAEDWELTFPPVERWSSSDSWASALSDWFQAVNTYPEDSFKSASTGSKLGMAIQDNILEQRTSSDNANNDEQTCLSLNLMQPDEPGQALERGLVKSDNTNGTVFKQGDKERLASCLDMDKDTTTMESQMSLLETSTPESHKADNNAVMETFNASLTHEFNAKLHGSLDISGKLLSAKREGNVLVEVTGGKVSQLGLVFEEERQSIFTSPSSSAYTRDKNLTGCVSNEERCHSSDVHLCICPSQSDSHVSSKAGHAEGNGSFLHSNIGNCTVKPYVEENIPQFIMPFAPICTGNTFLHRSFLKEDRSQADLDLPDKKIINKINLKSNKKSSSSDDSSEDNFHTCPDQSLSSSSGDSDDPSITDSGRKPAYSDTCDIGKELSKLLLLTGEHFMVSEDKRIAYVTLDLDESQHFGRFSLPNCEKQSKPDNMPHKTSKTSSDGKMRSKHKEKPDDKQQHGIQASKKQDPQPQSQVKNEGAGCEDCPVAVIETIVITEKIIPKTQGKKKKKHVQHGTPKPENDAPTDVRSESRQKNVNGKAENLELKVASNSLNKPVAQPSGKTDITKKDSAQKVMSVRPKVEPSMAKMDPAGVNATQKSSPIKLKADTFNTAKMENKTCTTDSLSTCLPSMLNDDIKRRRIADDLSRAVPIRTRPQLPAIFRQARKDGEDVTRRAYSEVVKQKNSTPKEVVVPRVVSEIQADPVPADPQNISLWCQFSPIPPEATIKWTKEAAVLSEINKVEKEDGRFTLTIIKACSKDLGFYKCSLIVANISVSTSEYHLTSEVLMELVIPSHDQPAEPRVMEGDEENIQCSPLLFKEDFLSDQYFGKNQPASILTEKVHFGEGMHRKAFRTTLTEGNLPRFRPGHPCVLKVHNSISYGTKNNEELVQKNYSLAVEECHVQNTAREYIKAYNSVAKSAESFGDLPEIIPIYLVHRPSNDIPYATLEEELLGDFVKYSVKDGKEINLMRRDSEAGQKCCAFQHWVYTQTEGNLLVTDMQGVGMKLTDVGIATCKKGYKGFRGNCATSFIDQFKALHQCNRYCELLGLVSLQPKPKRTVAPPKPKTQPVPKKKTFGPVLNAKS.

Disordered stretches follow at residues asparagine 23–leucine 65, alanine 211–lysine 231, leucine 1211–aspartate 1259, serine 1303–glycine 1365, lysine 1386–lysine 1423, and asparagine 1437–proline 1463. Residues alanine 211–asparagine 227 are compositionally biased toward polar residues. The span at leucine 1211–aspartate 1221 shows a compositional bias: low complexity. Positions serine 1325–glutamine 1342 are enriched in basic and acidic residues. The span at glutamine 1388–glutamine 1397 shows a compositional bias: basic residues. Residues proline 1401–glutamine 1417 show a composition bias toward basic and acidic residues. An Ig-like domain is found at proline 1577–serine 1659. Cysteine 1599 and cysteine 1649 form a disulfide bridge. The Alpha-type protein kinase domain occupies lysine 1702 to leucine 1934. The disordered stretch occupies residues lysine 1937–serine 1966.

The protein belongs to the protein kinase superfamily. Alpha-type protein kinase family. ALPK subfamily. Expressed in developing cardiac tissue.

The protein localises to the basolateral cell membrane. It catalyses the reaction L-seryl-[protein] + ATP = O-phospho-L-seryl-[protein] + ADP + H(+). It carries out the reaction L-threonyl-[protein] + ATP = O-phospho-L-threonyl-[protein] + ADP + H(+). Protein kinase that recognizes phosphorylation sites in which the surrounding peptides have an alpha-helical conformation. Regulates cardiac development and cardiomyocyte differentiation by negatively regulating Wnt/beta-catenin signaling. The protein is Alpha-protein kinase 2 (alpk2) of Danio rerio (Zebrafish).